Reading from the N-terminus, the 268-residue chain is Elongation factor Ts (268 aa).

Residues 81 to 84 (TDFV) are involved in Mg(2+) ion dislocation from EF-Tu.

It belongs to the EF-Ts family.

It is found in the cytoplasm. Functionally, associates with the EF-Tu.GDP complex and induces the exchange of GDP to GTP. It remains bound to the aminoacyl-tRNA.EF-Tu.GTP complex up to the GTP hydrolysis stage on the ribosome. The sequence is that of Elongation factor Ts from Buchnera aphidicola subsp. Acyrthosiphon pisum (strain 5A).